Here is a 96-residue protein sequence, read N- to C-terminus: MPSSNGPLEGTRGKLKNKPRDRGTSPPQRAVEEFDDGEKVHLKIDPSVPNGRFHPRFDGQTGTVEGKQGDAYKVDIVDGGKEKTIIVTAAHLRRQE.

A disordered region spans residues 1–66 (MPSSNGPLEG…FDGQTGTVEG (66 aa)).

Belongs to the eukaryotic ribosomal protein eL21 family. Part of the 50S ribosomal subunit. Interacts with protein L18 and binds the 5S rRNA. Has been cross-linked to L18.

Functionally, this is one of 5 proteins that mediate the attachment of the 5S rRNA onto the large ribosomal subunit, stabilizing the orientation of adjacent RNA domains. The protein is Large ribosomal subunit protein eL21 (rpl21e) of Haloarcula marismortui (strain ATCC 43049 / DSM 3752 / JCM 8966 / VKM B-1809) (Halobacterium marismortui).